The primary structure comprises 420 residues: Protein BDLF2 (420 aa).

2 disordered regions span residues 1 to 21 and 64 to 129; these read MVDEQVAVEHGTVSHTISREE and AAAV…GGQR. At 1–184 the chain is on the intravirion side; that stretch reads MVDEQVAVEH…AETLAEPPRC (184 aa). The span at 92–108 shows a compositional bias: low complexity; it reads TNTQDQNQNQTTRARTN. The helical; Signal-anchor for type II membrane protein transmembrane segment at 185 to 205 threads the bilayer; that stretch reads FMLSFVFIYYCCYLAFLALLA. Topologically, residues 206–420 are virion surface; the sequence is FGFNPLFLPS…LEEVMYVMVQ (215 aa). Asn-258, Asn-264, Asn-300, Asn-304, Asn-371, and Asn-384 each carry an N-linked (GlcNAc...) asparagine; by host glycan.

Belongs to the herpesviridae BDLF2 family. In terms of assembly, interacts with BMRF2.

The protein localises to the virion membrane. Rearranges cellular actin to increase intercellular contacts and thereby promote virus cell-to-cell spreading. Induce the outgrowth of long, branched plasma membrane fronds to create intercellular network for virion traffic. The fronds are actin based and RhoA-dependent. This chain is Protein BDLF2, found in Epstein-Barr virus (strain GD1) (HHV-4).